The sequence spans 390 residues: Chorismate synthase 1 (390 aa).

The NADP(+) site is built by R39 and R45. The interval E95–G117 is disordered. Residues R132–S134, N253–A254, G298, K313–T317, and R339 each bind FMN.

Belongs to the chorismate synthase family. As to quaternary structure, homotetramer. It depends on FMNH2 as a cofactor.

It catalyses the reaction 5-O-(1-carboxyvinyl)-3-phosphoshikimate = chorismate + phosphate. The protein operates within metabolic intermediate biosynthesis; chorismate biosynthesis; chorismate from D-erythrose 4-phosphate and phosphoenolpyruvate: step 7/7. Catalyzes the anti-1,4-elimination of the C-3 phosphate and the C-6 proR hydrogen from 5-enolpyruvylshikimate-3-phosphate (EPSP) to yield chorismate, which is the branch point compound that serves as the starting substrate for the three terminal pathways of aromatic amino acid biosynthesis. This reaction introduces a second double bond into the aromatic ring system. The protein is Chorismate synthase 1 of Bacillus cereus (strain ATCC 14579 / DSM 31 / CCUG 7414 / JCM 2152 / NBRC 15305 / NCIMB 9373 / NCTC 2599 / NRRL B-3711).